A 289-amino-acid chain; its full sequence is Probable phosphoribulokinase (289 aa).

Position 12–20 (12–20) interacts with ATP; the sequence is GSSGAGTTT.

The protein belongs to the phosphoribulokinase family.

It catalyses the reaction D-ribulose 5-phosphate + ATP = D-ribulose 1,5-bisphosphate + ADP + H(+). The sequence is that of Probable phosphoribulokinase (prkB) from Escherichia coli (strain K12).